Reading from the N-terminus, the 324-residue chain is Olfactory receptor 7G2 (324 aa).

Topologically, residues 1–25 (MEARNQTAISKFLLLGLIEDPELQP) are extracellular. An N-linked (GlcNAc...) asparagine glycan is attached at Asn-5. A helical transmembrane segment spans residues 26 to 46 (VLFSLFLSMYLVTILGNLLIL). Topologically, residues 47–54 (LAVISDSH) are cytoplasmic. A helical membrane pass occupies residues 55-75 (LHTPMYFFLSNLSFLDICLST). The Extracellular portion of the chain corresponds to 76–99 (TTIPKMLVNIQAQNRSITYSGCLT). Asn-89 carries N-linked (GlcNAc...) asparagine glycosylation. Cys-97 and Cys-189 are joined by a disulfide. Residues 100–120 (QICFVLFFAGLENCLLAAMAY) traverse the membrane as a helical segment. The Cytoplasmic segment spans residues 121–139 (DRYVAICHPLRYTVIMNPR). The chain crosses the membrane as a helical span at residues 140-160 (LCGLLILLSLLTSVVNALLLS). Residues 161–197 (LMVLRLSFCTDLEIPLFFCELAQVIQLTCSDTLINNI) lie on the Extracellular side of the membrane. A helical membrane pass occupies residues 198 to 217 (LIYFAACIFGGVPLSGIILS). Over 218–237 (YTQITSCVLRMPSASGKHKA) the chain is Cytoplasmic. A helical transmembrane segment spans residues 238-258 (VSTCGSHLSIVLLFYGAGLGV). The Extracellular segment spans residues 259–271 (YISSVVTDSPRKT). The chain crosses the membrane as a helical span at residues 272–292 (AVASVMYSVFPQMVNPFIYSL). Topologically, residues 293 to 324 (RNKDMKGTLRKFIGRIPSLLWCAICFGFRFLE) are cytoplasmic.

Belongs to the G-protein coupled receptor 1 family.

Its subcellular location is the cell membrane. In terms of biological role, odorant receptor. This chain is Olfactory receptor 7G2 (OR7G2), found in Homo sapiens (Human).